A 270-amino-acid chain; its full sequence is Interleukin-1 alpha (270 aa).

A propeptide spanning residues methionine 1 to arginine 114 is cleaved from the precursor. Asparagine 64 is a glycosylation site (N-linked (GlcNAc...) asparagine). Lysine 85 carries the N6-acetyllysine modification. Positions lysine 85 to leucine 89 are nuclear localization signal (NLS). Serine 90 bears the Phosphoserine mark. 2 N-linked (GlcNAc...) asparagine glycosylation sites follow: asparagine 139 and asparagine 143.

It belongs to the IL-1 family. In terms of assembly, monomer. Interacts with TMED10; the interaction mediates the translocation from the cytoplasm into the ERGIC (endoplasmic reticulum-Golgi intermediate compartment) and thereby secretion. Interacts with IL1R1. Interacts with S100A13; this interaction is the first step in the export of IL1A, followed by direct translocation of this complex across the plasma membrane. In terms of processing, acetylated within its nuclear localization sequence, which impacts subcellular localization. Post-translationally, proteolytic processed by CAPN1 in a calcium-dependent manner. Cleavage from 31 kDa precursor to 18 kDa biologically active molecules. Phosphorylated. Phosphorylation greatly enhances susceptibility to digestion and promotes the conversion of pre-IL1A alpha to the biologically active IL1A.

It is found in the nucleus. The protein resides in the cytoplasm. Its subcellular location is the secreted. Cytokine constitutively present intracellularly in nearly all resting non-hematopoietic cells that plays an important role in inflammation and bridges the innate and adaptive immune systems. After binding to its receptor IL1R1 together with its accessory protein IL1RAP, forms the high affinity interleukin-1 receptor complex. Signaling involves the recruitment of adapter molecules such as MYD88, IRAK1 or IRAK4. In turn, mediates the activation of NF-kappa-B and the three MAPK pathways p38, p42/p44 and JNK pathways. Within the cell, acts as an alarmin and cell death results in its liberation in the extracellular space after disruption of the cell membrane to induce inflammation and alert the host to injury or damage. In addition to its role as a danger signal, which occurs when the cytokine is passively released by cell necrosis, directly senses DNA damage and acts as a signal for genotoxic stress without loss of cell integrity. The sequence is that of Interleukin-1 alpha from Mus musculus (Mouse).